Reading from the N-terminus, the 433-residue chain is MTAASRANPYSIVSSEEDGLHLVTMSGANGFGNGKVHTRRRCRNRFVKKNGQCNIEFANMDEKSQRYLADMFTTCVDIRWRYMLLIFSLAFLASWLLFGIIFWVIAVAHGDLEPAEGRGRTPCVMQVHGFMAAFLFSIETQTTIGYGLRCVTEECPVAVFMVVAQSIVGCIIDSFMIGAIMAKMARPKKRAQTLLFSHNAVVALRDGKLCLMWRVGNLRKSHIVEAHVRAQLIKPRVTEEGEYIPLDQIDIDVGFDKGLDRIFLVSPITILHEIDEASPLFGISRQDLETDDFEIVVILEGMVEATAMTTQARSSYLANEILWGHRFEPVLFEEKNQYKIDYSHFHKTYEVPSTPRCSAKDLVENKFLLPSANSFCYENELAFLSRDEEDEADGDQDGRSRDGLSPQARHDFDRLQAGGGVLEQRPYRRESEI.

Residues 1–77 are Cytoplasmic-facing; that stretch reads MTAASRANPY…LADMFTTCVD (77 aa). The residue at position 75 (cysteine 75) is an S-nitrosocysteine. Residues 78–104 form a helical membrane-spanning segment; that stretch reads IRWRYMLLIFSLAFLASWLLFGIIFWV. Residues arginine 79 and arginine 81 each coordinate a 1,2-diacyl-sn-glycero-3-phospho-(1D-myo-inositol-4,5-bisphosphate). The Extracellular portion of the chain corresponds to 105–129; it reads IAVAHGDLEPAEGRGRTPCVMQVHG. A disulfide bond links cysteine 123 and cysteine 155. Positions 130–146 form an intramembrane region, helical; Pore-forming; it reads FMAAFLFSIETQTTIGY. K(+)-binding residues include threonine 143, isoleucine 144, glycine 145, and tyrosine 146. A Selectivity filter motif is present at residues 143-148; the sequence is TIGYGL. The Extracellular segment spans residues 147 to 155; that stretch reads GLRCVTEEC. A helical transmembrane segment spans residues 156 to 183; sequence PVAVFMVVAQSIVGCIIDSFMIGAIMAK. A 1,2-diacyl-sn-glycero-3-phospho-(1D-myo-inositol-4,5-bisphosphate)-binding residues include lysine 183 and lysine 188. The Cytoplasmic segment spans residues 184–433; sequence MARPKKRAQT…QRPYRRESEI (250 aa). A disordered region spans residues 387-433; sequence DEEDEADGDQDGRSRDGLSPQARHDFDRLQAGGGVLEQRPYRRESEI. Basic and acidic residues predominate over residues 396-414; that stretch reads QDGRSRDGLSPQARHDFDR. The PDZ-binding motif lies at 431–433; sequence SEI.

It belongs to the inward rectifier-type potassium channel (TC 1.A.2.1) family. KCNJ12 subfamily. Homotetramer. Forms heteromer with KCNJ4. Can form heteromeric channels with Kir2.6/KCNJ18. Association, via its PDZ-recognition domain, with LIN7A, LIN7B, LIN7C, DLG1, CASK and APBA1 plays a key role in its localization and trafficking.

It is found in the membrane. The protein resides in the cell membrane. The protein localises to the sarcolemma. Its subcellular location is the T-tubule. It carries out the reaction K(+)(in) = K(+)(out). With respect to regulation, activated by phosphatidylinositol 4,5-biphosphate (PtdIns(4,5)P2). PtdIns(4,5)P2 binding to the cytoplasmic side of the channel triggers a conformation change leading to channel opening. Inhibited by Ba(2+). Functionally, inward rectifying potassium channel that probably participates in controlling the resting membrane potential in electrically excitable cells. Probably participates in establishing action potential waveform and excitability of neuronal and muscle tissues. Inward rectifier potassium channels are characterized by a greater tendency to allow potassium to flow into the cell rather than out of it. Their voltage dependence is regulated by the concentration of extracellular potassium; as external potassium is raised, the voltage range of the channel opening shifts to more positive voltages. The inward rectification is mainly due to the blockage of outward current by internal magnesium. This is ATP-sensitive inward rectifier potassium channel 12 (KCNJ12) from Homo sapiens (Human).